Here is a 173-residue protein sequence, read N- to C-terminus: Superoxide dismutase [Cu-Zn] 2 (173 aa).

A signal peptide spans 1–19 (MKRLSLAMVTLLACAGAQA). Histidine 67, histidine 69, and histidine 92 together coordinate Cu cation. Cysteine 74 and cysteine 169 are joined by a disulfide. 4 residues coordinate Zn(2+): histidine 92, histidine 101, histidine 109, and aspartate 112. Histidine 147 is a Cu cation binding site.

This sequence belongs to the Cu-Zn superoxide dismutase family. As to quaternary structure, monomer. Requires Cu cation as cofactor. Zn(2+) is required as a cofactor.

The protein resides in the periplasm. It carries out the reaction 2 superoxide + 2 H(+) = H2O2 + O2. Its function is as follows. Destroys radicals which are normally produced within the cells and which are toxic to biological systems. This is Superoxide dismutase [Cu-Zn] 2 (sodC) from Salmonella typhimurium (strain LT2 / SGSC1412 / ATCC 700720).